A 297-amino-acid polypeptide reads, in one-letter code: Cyclin-dependent kinase 1 (297 aa).

Met1 is subject to N-acetylmethionine. A Phosphotyrosine; by PKR modification is found at Tyr4. Residues 4–287 (YIKIEKIGEG…GKMALKHPYF (284 aa)) enclose the Protein kinase domain. Residues Lys6 and Lys9 each carry the N6-acetyllysine; alternate modification. Glycyl lysine isopeptide (Lys-Gly) (interchain with G-Cter in SUMO2); alternate cross-links involve residues Lys6 and Lys9. 10 to 18 (IGEGTYGVV) contacts ATP. Thr14 bears the Phosphothreonine; by PKMYT1 mark. Tyr15 carries the post-translational modification Phosphotyrosine; by PKMYT1, WEE1, WEE2 and PKC/PRKCD. Tyr15 bears the Phosphotyrosine; by WEE1 and WEE2 mark. Tyr19 bears the Phosphotyrosine mark. Lys20 is covalently cross-linked (Glycyl lysine isopeptide (Lys-Gly) (interchain with G-Cter in SUMO2)). Position 33 (Lys33) interacts with ATP. Residue Ser39 is modified to Phosphoserine. Phosphotyrosine is present on Tyr77. Asp128 acts as the Proton acceptor in catalysis. A Glycyl lysine isopeptide (Lys-Gly) (interchain with G-Cter in SUMO2) cross-link involves residue Lys139. The residue at position 141 (Thr141) is a Phosphothreonine. Thr161 is subject to Phosphothreonine; by CAK. Phosphoserine is present on Ser178. Residue Thr222 is modified to Phosphothreonine. The residue at position 245 (Lys245) is an N6-succinyllysine. Residue Ser248 is modified to Phosphoserine.

This sequence belongs to the protein kinase superfamily. CMGC Ser/Thr protein kinase family. CDC2/CDKX subfamily. As to quaternary structure, forms a stable but non-covalent complex with a regulatory subunit and with a cyclin. Interacts with cyclins-B (CCNB1, CCNB2 and CCNB3) to form a serine/threonine kinase holoenzyme complex also known as maturation promoting factor (MPF). The cyclin subunit imparts substrate specificity to the complex. Can also form CDK1-cylin-D and CDK1-cyclin-E complexes that phosphorylate RB1 in vitro. Binds to RB1 and other transcription factors such as FOXO1 and RUNX2. Promotes G2-M transition when in complex with a cyclin-B. Interacts with DLGAP5. Binds to the CDK inhibitors CDKN1A/p21 and CDKN1B/p27. Isoform 2 is unable to complex with cyclin-B1 and also fails to bind to CDKN1A/p21. Interacts with catalytically active CCNB1 and RALBP1 during mitosis to form an endocytotic complex during interphase. Associates with cyclins-A and B1 during S-phase in regenerating hepatocytes. Interacts with FANCC. Interacts with CEP63; this interaction recruits CDK1 to centrosomes. Interacts with CENPA. Interacts with NR1D1. Interacts with proteasome subunit PSMA8; to participate in meiosis progression during spermatogenesis. Phosphorylation at Thr-161 by CAK/CDK7 activates kinase activity. Phosphorylation at Thr-14 and Tyr-15 by PKMYT1 prevents nuclear translocation. Phosphorylation at Tyr-15 by WEE1 and WEE2 inhibits the protein kinase activity and acts as a negative regulator of entry into mitosis (G2 to M transition). Phosphorylation by PKMYT1 and WEE1 takes place during mitosis to keep CDK1-cyclin-B complexes inactive until the end of G2. By the end of G2, PKMYT1 and WEE1 are inactivated, but CDC25A and CDC25B are activated. Dephosphorylation by active CDC25A and CDC25B at Thr-14 and Tyr-15, leads to CDK1 activation at the G2-M transition. Phosphorylation at Tyr-15 by WEE2 during oogenesis is required to maintain meiotic arrest in oocytes during the germinal vesicle (GV) stage, a long period of quiescence at dictyate prophase I, leading to prevent meiotic reentry. Phosphorylation by WEE2 is also required for metaphase II exit during egg activation to ensure exit from meiosis in oocytes and promote pronuclear formation. Phosphorylated at Tyr-4 by PKR/EIF2AK2 upon genotoxic stress. This phosphorylation triggers CDK1 polyubiquitination and subsequent proteolysis, thus leading to G2 arrest. In response to UV irradiation, phosphorylation at Tyr-15 by PRKCD activates the G2/M DNA damage checkpoint. Post-translationally, polyubiquitinated upon genotoxic stress.

The protein localises to the nucleus. It localises to the cytoplasm. Its subcellular location is the mitochondrion. It is found in the cytoskeleton. The protein resides in the microtubule organizing center. The protein localises to the centrosome. It localises to the spindle. The enzyme catalyses L-seryl-[protein] + ATP = O-phospho-L-seryl-[protein] + ADP + H(+). It carries out the reaction L-threonyl-[protein] + ATP = O-phospho-L-threonyl-[protein] + ADP + H(+). The catalysed reaction is [DNA-directed RNA polymerase] + ATP = phospho-[DNA-directed RNA polymerase] + ADP + H(+). Its activity is regulated as follows. Phosphorylation at Thr-14 or Tyr-15 inactivates the enzyme, while phosphorylation at Thr-161 activates it. Activated through a multistep process; binding to cyclin-B is required for relocation of cyclin-kinase complexes to the nucleus, activated by CAK/CDK7-mediated phosphorylation on Thr-161, and CDC25-mediated dephosphorylation of inhibitory phosphorylation on Thr-14 and Tyr-15. Activity is restricted during S-phase in an ATR-dependent manner to prevent premature entry into G2. Repressed by the CDK inhibitors CDKN1A/p21 and CDKN1B/p27 during the G1 phase and by CDKN1A/p21 at the G1-S checkpoint upon DNA damage. Transient activation by rapid and transient dephosphorylation at Tyr-15 triggered by TGFB1. In terms of biological role, plays a key role in the control of the eukaryotic cell cycle by modulating the centrosome cycle as well as mitotic onset; promotes G2-M transition via association with multiple interphase cyclins. Phosphorylates PARVA/actopaxin, APC, AMPH, APC, BARD1, Bcl-xL/BCL2L1, BRCA2, CALD1, CASP8, CDC7, CDC20, CDC25A, CDC25C, CC2D1A, CENPA, CSNK2 proteins/CKII, FZR1/CDH1, CDK7, CEBPB, CHAMP1, DMD/dystrophin, EEF1 proteins/EF-1, EZH2, KIF11/EG5, EGFR, FANCG, FOS, GFAP, GOLGA2/GM130, GRASP1, UBE2A/hHR6A, HIST1H1 proteins/histone H1, HMGA1, HIVEP3/KRC, KAT5, LMNA, LMNB, LBR, MKI67, LATS1, MAP1B, MAP4, MARCKS, MCM2, MCM4, MKLP1, MLST8, MYB, NEFH, NFIC, NPC/nuclear pore complex, PITPNM1/NIR2, NPM1, NCL, NUCKS1, NPM1/numatrin, ORC1, PRKAR2A, EEF1E1/p18, EIF3F/p47, p53/TP53, NONO/p54NRB, PAPOLA, PLEC/plectin, RB1, TPPP, UL40/R2, RAB4A, RAP1GAP, RBBP8/CtIP, RCC1, RPS6KB1/S6K1, KHDRBS1/SAM68, ESPL1, SKI, BIRC5/survivin, STIP1, TEX14, beta-tubulins, MAPT/TAU, NEDD1, VIM/vimentin, TK1, FOXO1, RUNX1/AML1, SAMHD1, SIRT2, CGAS, ZAR1 and RUNX2. CDK1/CDC2-cyclin-B controls pronuclear union in interphase fertilized eggs. Essential for early stages of embryonic development. During G2 and early mitosis, CDC25A/B/C-mediated dephosphorylation activates CDK1/cyclin complexes which phosphorylate several substrates that trigger at least centrosome separation, Golgi dynamics, nuclear envelope breakdown and chromosome condensation. Once chromosomes are condensed and aligned at the metaphase plate, CDK1 activity is switched off by WEE1- and PKMYT1-mediated phosphorylation to allow sister chromatid separation, chromosome decondensation, reformation of the nuclear envelope and cytokinesis. Phosphorylates KRT5 during prometaphase and metaphase. Inactivated by PKR/EIF2AK2- and WEE1-mediated phosphorylation upon DNA damage to stop cell cycle and genome replication at the G2 checkpoint thus facilitating DNA repair. Reactivated after successful DNA repair through WIP1-dependent signaling leading to CDC25A/B/C-mediated dephosphorylation and restoring cell cycle progression. Catalyzes lamin (LMNA, LMNB1 and LMNB2) phosphorylation at the onset of mitosis, promoting nuclear envelope breakdown. In proliferating cells, CDK1-mediated FOXO1 phosphorylation at the G2-M phase represses FOXO1 interaction with 14-3-3 proteins and thereby promotes FOXO1 nuclear accumulation and transcription factor activity, leading to cell death of postmitotic neurons. The phosphorylation of beta-tubulins regulates microtubule dynamics during mitosis. NEDD1 phosphorylation promotes PLK1-mediated NEDD1 phosphorylation and subsequent targeting of the gamma-tubulin ring complex (gTuRC) to the centrosome, an important step for spindle formation. In addition, CC2D1A phosphorylation regulates CC2D1A spindle pole localization and association with SCC1/RAD21 and centriole cohesion during mitosis. The phosphorylation of Bcl-xL/BCL2L1 after prolongated G2 arrest upon DNA damage triggers apoptosis. In contrast, CASP8 phosphorylation during mitosis prevents its activation by proteolysis and subsequent apoptosis. This phosphorylation occurs in cancer cell lines, as well as in primary breast tissues and lymphocytes. EZH2 phosphorylation promotes H3K27me3 maintenance and epigenetic gene silencing. CALD1 phosphorylation promotes Schwann cell migration during peripheral nerve regeneration. CDK1-cyclin-B complex phosphorylates NCKAP5L and mediates its dissociation from centrosomes during mitosis. Regulates the amplitude of the cyclic expression of the core clock gene BMAL1 by phosphorylating its transcriptional repressor NR1D1, and this phosphorylation is necessary for SCF(FBXW7)-mediated ubiquitination and proteasomal degradation of NR1D1. Phosphorylates EML3 at 'Thr-881' which is essential for its interaction with HAUS augmin-like complex and TUBG1. Phosphorylates CGAS during mitosis, leading to its inhibition, thereby preventing CGAS activation by self DNA during mitosis. Phosphorylates SKA3 during mitosis which promotes SKA3 binding to the NDC80 complex and anchoring of the SKA complex to kinetochores, to enable stable attachment of mitotic spindle microtubules to kinetochores. In Rattus norvegicus (Rat), this protein is Cyclin-dependent kinase 1 (Cdk1).